A 91-amino-acid polypeptide reads, in one-letter code: Probable Fe(2+)-trafficking protein (91 aa).

Belongs to the Fe(2+)-trafficking protein family.

In terms of biological role, could be a mediator in iron transactions between iron acquisition and iron-requiring processes, such as synthesis and/or repair of Fe-S clusters in biosynthetic enzymes. This chain is Probable Fe(2+)-trafficking protein, found in Glaesserella parasuis serovar 5 (strain SH0165) (Haemophilus parasuis).